A 52-amino-acid chain; its full sequence is UPF0181 protein VPA0916 (52 aa).

The protein belongs to the UPF0181 family.

The protein is UPF0181 protein VPA0916 of Vibrio parahaemolyticus serotype O3:K6 (strain RIMD 2210633).